The following is a 164-amino-acid chain: S-ribosylhomocysteine lyase (164 aa).

Positions 54, 58, and 128 each coordinate Fe cation.

This sequence belongs to the LuxS family. Homodimer. Fe cation serves as cofactor.

The enzyme catalyses S-(5-deoxy-D-ribos-5-yl)-L-homocysteine = (S)-4,5-dihydroxypentane-2,3-dione + L-homocysteine. Functionally, involved in the synthesis of autoinducer 2 (AI-2) which is secreted by bacteria and is used to communicate both the cell density and the metabolic potential of the environment. The regulation of gene expression in response to changes in cell density is called quorum sensing. Catalyzes the transformation of S-ribosylhomocysteine (RHC) to homocysteine (HC) and 4,5-dihydroxy-2,3-pentadione (DPD). The chain is S-ribosylhomocysteine lyase from Campylobacter hominis (strain ATCC BAA-381 / DSM 21671 / CCUG 45161 / LMG 19568 / NCTC 13146 / CH001A).